Consider the following 160-residue polypeptide: Transcriptional repressor NrdR (160 aa).

Polar residues predominate over residues 1–11 (MRCPSCSSLDT). A disordered region spans residues 1–20 (MRCPSCSSLDTQVKDSRPTE). The segment at 3-34 (CPSCSSLDTQVKDSRPTEDSSVIRRRRVCLAC) is a zinc-finger region. The ATP-cone domain maps to 49–139 (LTVIKRNGRR…VYRNFREAKD (91 aa)).

It belongs to the NrdR family. Zn(2+) serves as cofactor.

Functionally, negatively regulates transcription of bacterial ribonucleotide reductase nrd genes and operons by binding to NrdR-boxes. The chain is Transcriptional repressor NrdR from Rhodopseudomonas palustris (strain BisA53).